A 427-amino-acid chain; its full sequence is Tol-Pal system protein TolB (427 aa).

An N-terminal signal peptide occupies residues 1–25 (MKTFAQLRLLLAAAALALLSFSAQA).

The protein belongs to the TolB family. The Tol-Pal system is composed of five core proteins: the inner membrane proteins TolA, TolQ and TolR, the periplasmic protein TolB and the outer membrane protein Pal. They form a network linking the inner and outer membranes and the peptidoglycan layer.

It is found in the periplasm. In terms of biological role, part of the Tol-Pal system, which plays a role in outer membrane invagination during cell division and is important for maintaining outer membrane integrity. The polypeptide is Tol-Pal system protein TolB (Azoarcus sp. (strain BH72)).